A 124-amino-acid chain; its full sequence is Large ribosomal subunit protein bL12 (124 aa).

Belongs to the bacterial ribosomal protein bL12 family. Homodimer. Part of the ribosomal stalk of the 50S ribosomal subunit. Forms a multimeric L10(L12)X complex, where L10 forms an elongated spine to which 2 to 4 L12 dimers bind in a sequential fashion. Binds GTP-bound translation factors.

In terms of biological role, forms part of the ribosomal stalk which helps the ribosome interact with GTP-bound translation factors. Is thus essential for accurate translation. The chain is Large ribosomal subunit protein bL12 from Hamiltonella defensa subsp. Acyrthosiphon pisum (strain 5AT).